Consider the following 203-residue polypeptide: Holliday junction branch migration complex subunit RuvA (203 aa).

A domain I region spans residues 1 to 64 (MIGRLRGIIL…EDAQLLYGFN (64 aa)). Residues 65 to 142 (NKQERTLFKE…KGLHGDLFTP (78 aa)) form a domain II region. The segment at 143–154 (AVDLVLTSPASP) is flexible linker. A domain III region spans residues 155-203 (TSEDAEQEAVAALVALGYKPQEASRMVNKIARPDASSETLIRDALRAAL).

This sequence belongs to the RuvA family. Homotetramer. Forms an RuvA(8)-RuvB(12)-Holliday junction (HJ) complex. HJ DNA is sandwiched between 2 RuvA tetramers; dsDNA enters through RuvA and exits via RuvB. An RuvB hexamer assembles on each DNA strand where it exits the tetramer. Each RuvB hexamer is contacted by two RuvA subunits (via domain III) on 2 adjacent RuvB subunits; this complex drives branch migration. In the full resolvosome a probable DNA-RuvA(4)-RuvB(12)-RuvC(2) complex forms which resolves the HJ.

The protein localises to the cytoplasm. The RuvA-RuvB-RuvC complex processes Holliday junction (HJ) DNA during genetic recombination and DNA repair, while the RuvA-RuvB complex plays an important role in the rescue of blocked DNA replication forks via replication fork reversal (RFR). RuvA specifically binds to HJ cruciform DNA, conferring on it an open structure. The RuvB hexamer acts as an ATP-dependent pump, pulling dsDNA into and through the RuvAB complex. HJ branch migration allows RuvC to scan DNA until it finds its consensus sequence, where it cleaves and resolves the cruciform DNA. This chain is Holliday junction branch migration complex subunit RuvA, found in Salmonella choleraesuis (strain SC-B67).